Reading from the N-terminus, the 238-residue chain is Uridylate kinase (238 aa).

12-15 provides a ligand contact to ATP; it reads KLSG. Gly-54 lines the UMP pocket. ATP is bound by residues Gly-55 and Arg-59. UMP-binding positions include Asp-74 and 135-142; that span reads TGNPFFTT. ATP-binding residues include Thr-162, Asn-163, Tyr-168, and Asp-171.

Belongs to the UMP kinase family. Homohexamer.

It localises to the cytoplasm. The catalysed reaction is UMP + ATP = UDP + ADP. It functions in the pathway pyrimidine metabolism; CTP biosynthesis via de novo pathway; UDP from UMP (UMPK route): step 1/1. Inhibited by UTP. Functionally, catalyzes the reversible phosphorylation of UMP to UDP. The polypeptide is Uridylate kinase (Rhodopseudomonas palustris (strain HaA2)).